A 134-amino-acid chain; its full sequence is Early E3B 14.9 kDa protein (134 aa).

Residues 1 to 19 form the signal peptide; the sequence is MQAMLPVILILLLPCIALA. A helical transmembrane segment spans residues 54-78; it reads YWIVIVGIINILSCTFFSITIYPTF.

Belongs to the adenoviridae E3_14 family. Phosphorylated on serine; O-glycosylated, but not N-glycosylated.

Its subcellular location is the host membrane. Down-regulates the EGF receptor and prevents cytolysis by TNF. This Homo sapiens (Human) protein is Early E3B 14.9 kDa protein.